A 309-amino-acid chain; its full sequence is Anamorsin homolog (309 aa).

The segment at 4–169 (VSPGHSVLLL…SYEVGSSAQL (166 aa)) is N-terminal SAM-like domain. The linker stretch occupies residues 170-218 (TLSFAKKKQVEKPKLDENTAKIWSLSAVDMNDDDIDLLDPDELLDEEDL). [2Fe-2S] cluster is bound by residues C230, C242, C245, and C247. Residues 230-247 (CGTGGDTKKRKACKNCTC) form a fe-S binding site A region. [4Fe-4S] cluster contacts are provided by C270, C273, C281, and C284. Short sequence motifs (cx2C motif) lie at residues 270–273 (CGNC) and 281–284 (CASC). A fe-S binding site B region spans residues 270-284 (CGNCYLGDAFRCASC).

It belongs to the anamorsin family. As to quaternary structure, monomer. [2Fe-2S] cluster is required as a cofactor. [4Fe-4S] cluster serves as cofactor.

The protein resides in the cytoplasm. It is found in the mitochondrion intermembrane space. In terms of biological role, component of the cytosolic iron-sulfur (Fe-S) protein assembly (CIA) machinery. Required for the maturation of extramitochondrial Fe-S proteins. Part of an electron transfer chain functioning in an early step of cytosolic Fe-S biogenesis, facilitating the de novo assembly of a [4Fe-4S] cluster on the cytosolic Fe-S scaffold complex. Electrons are transferred from NADPH via a FAD- and FMN-containing diflavin oxidoreductase. Together with the diflavin oxidoreductase, also required for the assembly of the diferric tyrosyl radical cofactor of ribonucleotide reductase (RNR), probably by providing electrons for reduction during radical cofactor maturation in the catalytic small subunit. The sequence is that of Anamorsin homolog from Branchiostoma floridae (Florida lancelet).